Here is a 248-residue protein sequence, read N- to C-terminus: UPF0246 protein A1I_02510 (248 aa).

This sequence belongs to the UPF0246 family.

The chain is UPF0246 protein A1I_02510 from Rickettsia bellii (strain OSU 85-389).